A 371-amino-acid polypeptide reads, in one-letter code: Peptide chain release factor 2 (371 aa).

Q251 carries the post-translational modification N5-methylglutamine.

It belongs to the prokaryotic/mitochondrial release factor family. Post-translationally, methylated by PrmC. Methylation increases the termination efficiency of RF2.

It is found in the cytoplasm. Functionally, peptide chain release factor 2 directs the termination of translation in response to the peptide chain termination codons UGA and UAA. This chain is Peptide chain release factor 2, found in Pseudarthrobacter chlorophenolicus (strain ATCC 700700 / DSM 12829 / CIP 107037 / JCM 12360 / KCTC 9906 / NCIMB 13794 / A6) (Arthrobacter chlorophenolicus).